Here is a 215-residue protein sequence, read N- to C-terminus: Secretory component protein psh3 (215 aa).

Residues 1 to 21 (MAKRSIFRFADEKGLKVAARY) are Cytoplasmic-facing. The helical transmembrane segment at 22–42 (GVLMSTSFIFALLFHSSVADV) threads the bilayer. Residues 43–67 (NTLWSPGPESAFDAAETYYTLVAGS) lie on the Extracellular side of the membrane. A helical membrane pass occupies residues 68–88 (HFIVKYTVYTIMGLNMIFHLI). The Cytoplasmic portion of the chain corresponds to 89 to 105 (QATGAKGDDKLFFYSST). The chain crosses the membrane as a helical span at residues 106 to 126 (LLYLTALILFIVNVAPSMLVV). The Extracellular segment spans residues 127-147 (KLQNYVQFPRNMHLSVLAASH). Residues 148 to 168 (VLVEFLLAGVILIQLGYVFGY) traverse the membrane as a helical segment. Topologically, residues 169-215 (HVQSIQQREYAEDMREQELAEKAKLESESATTQSVETVSTESVSKRK) are cytoplasmic. The interval 190-215 (KAKLESESATTQSVETVSTESVSKRK) is disordered. The span at 196–215 (ESATTQSVETVSTESVSKRK) shows a compositional bias: low complexity.

It to yeast SHR3. As to quaternary structure, monomer.

It localises to the endoplasmic reticulum membrane. Functionally, involved in amino acid permease processing and required for the efficient translocation of structurally related amino acid permeases from the endoplasmic reticulum to the plasma membrane. The chain is Secretory component protein psh3 (psh3) from Schizosaccharomyces pombe (strain 972 / ATCC 24843) (Fission yeast).